The chain runs to 193 residues: DNA damage-inducible transcript 4-like protein (193 aa).

This sequence belongs to the DDIT4 family. As to expression, up-regulated in atherosclerotic plaques relative to healthy segments of the same artery.

Its subcellular location is the cytoplasm. Its function is as follows. Inhibits cell growth by regulating the TOR signaling pathway upstream of the TSC1-TSC2 complex and downstream of AKT1. The polypeptide is DNA damage-inducible transcript 4-like protein (DDIT4L) (Homo sapiens (Human)).